We begin with the raw amino-acid sequence, 127 residues long: Evasin P467 (127 aa).

Residues 1–21 (MALKACITVIAVVYVVQVVRG) form the signal peptide. 4 disulfide bridges follow: C42–C63, C59–C100, C76–C105, and C95–C114. 2 N-linked (GlcNAc...) asparagine glycosylation sites follow: N49 and N94.

The protein resides in the secreted. In terms of biological role, salivary chemokine-binding protein which binds to host chemokines CCL1, CCL2, CCL3 and CCL5. This Rhipicephalus pulchellus (Yellow backed tick) protein is Evasin P467.